The primary structure comprises 800 residues: MAGHMLMPLRRRPWTCRACLQRLQQPRRSLETAASPSSQSDVYDYAPTNHSTQKKSNDETLRRVFDSQPFWREFSQRSATQSKPTGLVQNQYLTNPDGFRAFANVSLQRCQAIVAKVLAASTLEEYRDMARDLDRLSDLLCRVIDLSDFIRVIHPDPRVQEAATQAYALMFEYMNVLNTTTGLNDQLKKAASNPDVTSYWSEEEKIVAQILIKDFSNSAIHMPPNERQRFVNLSNDISQLGSNFVNSAEPAKSQVVVGANSLRGLDPILVQQIRRWNRTASVPTTGMIPRLALRSVHDEGVRREVYLATRTSSSRQLHRLEELLSKRAELAQLSGHASFGHMTLSDKMAKSPEAVSNFLTALVGSNREYVQEELSKLQAMKGGSPLQPWDHAYYVHQRVLQYSQSRRSRELSAVPEFFSLGTVMQGLSRLFDRLYGVRLVPQETAAGETWNPDVRRLDVVDEAERHIAVIYCDLFSRPNKHPNPAHFTLRCAREISSEEVAECATMDHSAHPNDGMATAVDPQSKTLRQLPTIALVCDFAEPPATGAGRPSLLSEHSVRTLFHEMGHALHSILGQTRLQSISGTRCATDFAELPSVLMERFATEPAVLSMYARHWQTDQPLSESMMLSMEKDRLAHGSIYGAVENEAQILMALVDQAYHSIPADKAGQIDSTAIYHQVSSAHSTLPDPTDSRPPTSWQGFFGHLYGYGATYYSYIFDRAIANKIWEDVFQAGKAAVDREAGERYKNEVLRWGGGRNGWDCVAGVLGSANAANANGRLAEGGDEAMREVGRWGLGRDGVSG.

Residues 1-23 constitute a mitochondrion transit peptide; sequence MAGHMLMPLRRRPWTCRACLQRL. Over residues 27–41 the composition is skewed to polar residues; sequence RRSLETAASPSSQSD. Positions 27–59 are disordered; that stretch reads RRSLETAASPSSQSDVYDYAPTNHSTQKKSNDE. Residue His-563 participates in Zn(2+) binding. Glu-564 is a catalytic residue. Zn(2+) contacts are provided by His-567 and His-570.

Belongs to the peptidase M3 family. Requires Zn(2+) as cofactor.

Its subcellular location is the mitochondrion matrix. The enzyme catalyses Release of an N-terminal octapeptide as second stage of processing of some proteins imported into the mitochondrion.. In terms of biological role, cleaves proteins, imported into the mitochondrion, to their mature size. While most mitochondrial precursor proteins are processed to the mature form in one step by mitochondrial processing peptidase (MPP), the sequential cleavage by MIP of an octapeptide after initial processing by MPP is a required step for a subgroup of nuclear-encoded precursor proteins destined for the matrix or the inner membrane. In Aspergillus oryzae (strain ATCC 42149 / RIB 40) (Yellow koji mold), this protein is Mitochondrial intermediate peptidase (oct1).